A 142-amino-acid chain; its full sequence is Large ribosomal subunit protein uL13 (142 aa).

This sequence belongs to the universal ribosomal protein uL13 family. In terms of assembly, part of the 50S ribosomal subunit.

In terms of biological role, this protein is one of the early assembly proteins of the 50S ribosomal subunit, although it is not seen to bind rRNA by itself. It is important during the early stages of 50S assembly. The chain is Large ribosomal subunit protein uL13 from Geobacter sp. (strain M21).